Consider the following 264-residue polypeptide: H-2 class II histocompatibility antigen, E-B beta chain (264 aa).

The N-terminal stretch at 1–26 (MVWLPRVPCVAAVILLLTVLSPPMAL) is a signal peptide. Positions 27-121 (VRDSRPWFLE…ISDKFLVRRR (95 aa)) are beta-1. Residues 27–225 (VRDSRPWFLE…KAQSTSAQNK (199 aa)) are Extracellular-facing. 2 cysteine pairs are disulfide-bonded: C38–C106 and C144–C200. The N-linked (GlcNAc...) asparagine glycan is linked to N46. Residues 122–225 (VEPTVTVYPT…KAQSTSAQNK (104 aa)) are beta-2. In terms of domain architecture, Ig-like C1-type spans 124–214 (PTVTVYPTKT…PSLTDPVTVE (91 aa)). The chain crosses the membrane as a helical span at residues 226–246 (MLSGVGGFVLGLLFLGAGLFI). Over 247-264 (YFRNQKGQSGLQPTGLLS) the chain is Cytoplasmic.

The protein belongs to the MHC class II family. Ubiquitinated in immature dendritic cells leading to down-regulation of MHC class II.

Its subcellular location is the membrane. In Mus musculus (Mouse), this protein is H-2 class II histocompatibility antigen, E-B beta chain (H2-Eb1).